The primary structure comprises 412 residues: Divalent metal cation transporter MntH (412 aa).

Over 1-19 the chain is Cytoplasmic; it reads MTNYRVESSSGRAARKMRL. Residues 20 to 39 traverse the membrane as a helical segment; that stretch reads ALMGPAFIAAIGYIDPGNFA. Residues 40 to 51 are Periplasmic-facing; it reads TNIQAGASFGYQ. Residues 52 to 71 form a helical membrane-spanning segment; the sequence is LLWVVVWANLMAMLIQILSA. The Cytoplasmic segment spans residues 72–95; it reads KLGIATGKNLAEQIRDHYPRPVVW. Residues 96-118 traverse the membrane as a helical segment; that stretch reads FYWVQAEIIAMATDLAEFIGAAI. The Periplasmic segment spans residues 119-125; sequence GFKLILG. The helical transmembrane segment at 126–145 threads the bilayer; sequence VSLLQGAVLTGIATFLILML. The Cytoplasmic segment spans residues 146-155; that stretch reads QRRGQKPLEK. The chain crosses the membrane as a helical span at residues 156 to 175; sequence VIGGLLLFVAAAYIVELIFS. The Periplasmic segment spans residues 176–196; the sequence is QPNLAQLGKGMVIPSLPTSEA. Residues 197–220 traverse the membrane as a helical segment; sequence VFLAAGVLGATIMPHVIYLHSSLT. Residues 221–238 lie on the Cytoplasmic side of the membrane; the sequence is QHLHGGSRQQRYSATKWD. Residues 239-258 traverse the membrane as a helical segment; it reads VAIAMTIAGFVNLAMMATAA. Residues 259–276 are Periplasmic-facing; sequence AAFHFSGHTGVADLDEAY. The chain crosses the membrane as a helical span at residues 277 to 297; sequence LTLQPLLSHAAATVFGLSLVA. Residues 298–327 lie on the Cytoplasmic side of the membrane; the sequence is AGLSSTVVGTLAGQVVMQGFIRFHIPLWVR. The chain crosses the membrane as a helical span at residues 328-344; sequence RTVTMLPSFIVILMGLD. Over 345–350 the chain is Periplasmic; sequence PTRILV. A helical membrane pass occupies residues 351–370; the sequence is MSQVLLSFGIALALVPLLIF. Topologically, residues 371–387 are cytoplasmic; it reads TSDSKLMGDLVNSKRVK. A helical transmembrane segment spans residues 388 to 406; it reads QTGWVIVVLVVALNIWLLV. Topologically, residues 407-412 are periplasmic; that stretch reads GTALGL.

It belongs to the NRAMP family.

The protein resides in the cell inner membrane. H(+)-stimulated, divalent metal cation uptake system. The sequence is that of Divalent metal cation transporter MntH from Escherichia fergusonii (strain ATCC 35469 / DSM 13698 / CCUG 18766 / IAM 14443 / JCM 21226 / LMG 7866 / NBRC 102419 / NCTC 12128 / CDC 0568-73).